A 742-amino-acid polypeptide reads, in one-letter code: MSLLLEPSKEQIKEEKLYQQMGVSDDEFALIESIIGRLPNYTEIGIFSVMWSEHCSYKNSKPVLRKFPTSGERVLQGPGEGAGIVDIGDNQAVVFKIESHNHPSAIEPYQGAATGVGGIIRDVFSMGARPIAVLNSLRFGELTSPRVKYLFEEVVAGIAGYGNCIGIPTVGGEVQFDASYEGNPLVNAMCVGLIDHKDIKKGQAKGVGNTVMYVGAKTGRDGIHGATFASEEMSDSSEEKRSAVQVGDPFMEKLLLEACLEVIQCDALVGIQDMGAAGLTSSSAEMASKAGSGIEMNLDLIPQRETGMTAYEMMLSESQERMLLVIERGREQEIVDIFDKYDLEAVSVGHVTDDKMLRLRHNGEVVCELPVDALAEEAPVYHKPSAEPAYYREFQETEAPAPEVKDATETLFALLQQPTIASKEWVYDQYDYMVRTNTVVAPGSDAGVLRIRGTKKALAMTTDCNARYLYLDPEEGGKIAVAEAARNIVCSGAEPLAVTDNLNFGNPEKPEIFWQIEKAADGISEACNVLSTPVIGGNVSLYNESNGTAIYPTPVIGMVGLIEDTAHITTQHFKQAGDLVYVIGETKPEFAGSELQKMTEGRIYGKAPQIDLDIELSRQKALLDAIKKGFVQSAHDVSEGGLGVAIAESVMTTENLGANVTVEGEAALLFSESQSRFVVSVKKEHQAAFEAAVADAVHIGEVTADGLLAIQNQDGQQLVHAQTKELERAWKGAIPCLLKSKA.

His-54 is a catalytic residue. Residues Tyr-57 and Lys-96 each contribute to the ATP site. Glu-98 lines the Mg(2+) pocket. Residues 99–102 (SHNH) and Arg-121 contribute to the substrate site. His-100 serves as the catalytic Proton acceptor. Residue Asp-122 participates in Mg(2+) binding. Substrate is bound at residue Gln-245. Asp-273 serves as a coordination point for Mg(2+). 317 to 319 (ESQ) contacts substrate. Residues Asp-500 and Gly-537 each coordinate ATP. Asn-538 contributes to the Mg(2+) binding site. Ser-540 lines the substrate pocket.

This sequence belongs to the FGAMS family. As to quaternary structure, monomer. Part of the FGAM synthase complex composed of 1 PurL, 1 PurQ and 2 PurS subunits.

Its subcellular location is the cytoplasm. It carries out the reaction N(2)-formyl-N(1)-(5-phospho-beta-D-ribosyl)glycinamide + L-glutamine + ATP + H2O = 2-formamido-N(1)-(5-O-phospho-beta-D-ribosyl)acetamidine + L-glutamate + ADP + phosphate + H(+). Its pathway is purine metabolism; IMP biosynthesis via de novo pathway; 5-amino-1-(5-phospho-D-ribosyl)imidazole from N(2)-formyl-N(1)-(5-phospho-D-ribosyl)glycinamide: step 1/2. In terms of biological role, part of the phosphoribosylformylglycinamidine synthase complex involved in the purines biosynthetic pathway. Catalyzes the ATP-dependent conversion of formylglycinamide ribonucleotide (FGAR) and glutamine to yield formylglycinamidine ribonucleotide (FGAM) and glutamate. The FGAM synthase complex is composed of three subunits. PurQ produces an ammonia molecule by converting glutamine to glutamate. PurL transfers the ammonia molecule to FGAR to form FGAM in an ATP-dependent manner. PurS interacts with PurQ and PurL and is thought to assist in the transfer of the ammonia molecule from PurQ to PurL. This Bacillus velezensis (strain DSM 23117 / BGSC 10A6 / LMG 26770 / FZB42) (Bacillus amyloliquefaciens subsp. plantarum) protein is Phosphoribosylformylglycinamidine synthase subunit PurL.